A 280-amino-acid chain; its full sequence is Chlorophyll a-b binding protein CP26, chloroplastic (280 aa).

The transit peptide at 1-48 (MASLGVSEMLGTPLNFRAVSRSSAPLASSPSTFKTVALFSKKKPAPAK) directs the protein to the chloroplast. Phe70 contacts chlorophyll b. Chlorophyll a is bound by residues Tyr95, Glu114, and His117. The next 2 membrane-spanning stretches (helical) occupy residues 110 to 130 (YQAF…GFII) and 167 to 187 (IPIN…GAEY). Positions 119, 167, 186, and 189 each coordinate chlorophyll b. Positions 224, 225, 228, 230, 242, and 257 each coordinate chlorophyll a. Residues 231 to 251 (LAMFAMLGFFIQAYVTGEGPV) traverse the membrane as a helical segment.

It belongs to the light-harvesting chlorophyll a/b-binding (LHC) protein family. Forms heterotrimers with LHCB3. The LHC complex consists of chlorophyll a-b binding proteins. Requires Binds at least 14 chlorophylls (8 Chl-a and 6 Chl-b) and carotenoids such as lutein and neoxanthin. as cofactor. In terms of processing, photoregulated by reversible phosphorylation of its threonine residues.

It localises to the plastid. Its subcellular location is the chloroplast thylakoid membrane. In terms of biological role, the light-harvesting complex (LHC) functions as a light receptor, it captures and delivers excitation energy to photosystems with which it is closely associated. This Arabidopsis thaliana (Mouse-ear cress) protein is Chlorophyll a-b binding protein CP26, chloroplastic (LHCB5).